The following is a 339-amino-acid chain: DNA-directed RNA polymerase subunit alpha (339 aa).

Positions 1 to 235 (MVIQKNWQEL…DQLQIFVNFE (235 aa)) are alpha N-terminal domain (alpha-NTD). The interval 251–339 (FNPALLKKVD…DLAKRFEEHY (89 aa)) is alpha C-terminal domain (alpha-CTD).

This sequence belongs to the RNA polymerase alpha chain family. As to quaternary structure, homodimer. The RNAP catalytic core consists of 2 alpha, 1 beta, 1 beta' and 1 omega subunit. When a sigma factor is associated with the core the holoenzyme is formed, which can initiate transcription.

It catalyses the reaction RNA(n) + a ribonucleoside 5'-triphosphate = RNA(n+1) + diphosphate. DNA-dependent RNA polymerase catalyzes the transcription of DNA into RNA using the four ribonucleoside triphosphates as substrates. The protein is DNA-directed RNA polymerase subunit alpha of Methylobacterium sp. (strain 4-46).